Here is a 316-residue protein sequence, read N- to C-terminus: Lipoyl synthase (316 aa).

Positions 66, 71, 77, 92, 96, 99, and 306 each coordinate [4Fe-4S] cluster. In terms of domain architecture, Radical SAM core spans 78–295 (FNRGTATFMI…NLIAFDLGFK (218 aa)).

This sequence belongs to the radical SAM superfamily. Lipoyl synthase family. [4Fe-4S] cluster serves as cofactor.

The protein resides in the cytoplasm. It carries out the reaction [[Fe-S] cluster scaffold protein carrying a second [4Fe-4S](2+) cluster] + N(6)-octanoyl-L-lysyl-[protein] + 2 oxidized [2Fe-2S]-[ferredoxin] + 2 S-adenosyl-L-methionine + 4 H(+) = [[Fe-S] cluster scaffold protein] + N(6)-[(R)-dihydrolipoyl]-L-lysyl-[protein] + 4 Fe(3+) + 2 hydrogen sulfide + 2 5'-deoxyadenosine + 2 L-methionine + 2 reduced [2Fe-2S]-[ferredoxin]. Its pathway is protein modification; protein lipoylation via endogenous pathway; protein N(6)-(lipoyl)lysine from octanoyl-[acyl-carrier-protein]: step 2/2. In terms of biological role, catalyzes the radical-mediated insertion of two sulfur atoms into the C-6 and C-8 positions of the octanoyl moiety bound to the lipoyl domains of lipoate-dependent enzymes, thereby converting the octanoylated domains into lipoylated derivatives. This is Lipoyl synthase from Wigglesworthia glossinidia brevipalpis.